Consider the following 393-residue polypeptide: CCA-adding enzyme (393 aa).

Positions 27 and 30 each coordinate ATP. G27 and R30 together coordinate CTP. Mg(2+)-binding residues include D40 and D42. ATP is bound by residues R111, D154, R157, R160, and R163. 5 residues coordinate CTP: R111, D154, R157, R160, and R163.

The protein belongs to the tRNA nucleotidyltransferase/poly(A) polymerase family. Bacterial CCA-adding enzyme type 3 subfamily. Homodimer. Requires Mg(2+) as cofactor.

The catalysed reaction is a tRNA precursor + 2 CTP + ATP = a tRNA with a 3' CCA end + 3 diphosphate. It catalyses the reaction a tRNA with a 3' CCA end + 2 CTP + ATP = a tRNA with a 3' CCACCA end + 3 diphosphate. Its function is as follows. Catalyzes the addition and repair of the essential 3'-terminal CCA sequence in tRNAs without using a nucleic acid template. Adds these three nucleotides in the order of C, C, and A to the tRNA nucleotide-73, using CTP and ATP as substrates and producing inorganic pyrophosphate. tRNA 3'-terminal CCA addition is required both for tRNA processing and repair. Also involved in tRNA surveillance by mediating tandem CCA addition to generate a CCACCA at the 3' terminus of unstable tRNAs. While stable tRNAs receive only 3'-terminal CCA, unstable tRNAs are marked with CCACCA and rapidly degraded. In Listeria innocua serovar 6a (strain ATCC BAA-680 / CLIP 11262), this protein is CCA-adding enzyme.